Reading from the N-terminus, the 201-residue chain is Myosin regulatory light chain 2 (201 aa).

Residues 1–48 (MADKDKKVKKKKAKEDAPAEEAPAAAAPAGDRQSSRGSRKAKRTGSNV) form a disordered region. A compositionally biased stretch (low complexity) spans 20–29 (EEAPAAAAPA). A Phosphoserine modification is found at Ser46. 3 EF-hand domains span residues 55–90 (KQVAEFKEAFQLMDHDKDGIIGKNDLRATFDSLGRL), 125–158 (DEDDVVINAFKTFDEEGKIDSERLRHALMTWGDK), and 159–194 (FSADEVDEAYDQMDIDDKGYIDTTKLIAMLTASAEE). Residues Asp68, Asp70, Asp72, and Asp79 each coordinate Ca(2+).

Myosin is a hexamer of 2 heavy chains and 4 light chains.

The protein is Myosin regulatory light chain 2 of Bombyx mori (Silk moth).